The chain runs to 483 residues: UDP-glycosyltransferase 85C1 (483 aa).

Residues serine 304, tryptophan 360 to cysteine 361, histidine 378 to glutamate 386, and isoleucine 400 to glutamine 403 each bind UDP-alpha-D-glucose.

It belongs to the UDP-glycosyltransferase family.

Functionally, may glycosylate diterpenes or flavonols in leaves. This is UDP-glycosyltransferase 85C1 from Stevia rebaudiana (Stevia).